Here is a 124-residue protein sequence, read N- to C-terminus: uncharacterized protein (124 aa).

This is an uncharacterized protein from Schizosaccharomyces pombe (strain 972 / ATCC 24843) (Fission yeast).